Here is a 306-residue protein sequence, read N- to C-terminus: MELKDYYAIMGVKPTDDLKTIKTAYRRLARKYHPDVSKEPDAEARFKEVAEAWEVLSDEQRRAEYDQMWQHRNDPQFSRQFQHGDGQSFNAEDFDDIFSSIFGQHARQSHQRPATRGHDIEIEVAVFLEETLTEHKRTISYNLPVYNAFGMIEQEIPKTLKVKIPAGVGNGQRIRLKGQGTPGENGGPNGDLWLVIHIAPHPLFDIVGQDLEIVVPVSPWEAALGAKVTVPTLKESILLTIPPGSQAGQRLRVKGKGLVSKKQTGDLYAVLKIVMPPKPDENTAALWQQLADAQSSFEPRKDWGKA.

Residues 5 to 69 (DYYAIMGVKP…QRRAEYDQMW (65 aa)) form the J domain.

Its subcellular location is the cytoplasm. The protein localises to the nucleoid. DNA-binding protein that preferentially recognizes a curved DNA sequence. It is probably a functional analog of DnaJ; displays overlapping activities with DnaJ, but functions under different conditions, probably acting as a molecular chaperone in an adaptive response to environmental stresses other than heat shock. Lacks autonomous chaperone activity; binds native substrates and targets them for recognition by DnaK. Its activity is inhibited by the binding of CbpM. The chain is Curved DNA-binding protein from Escherichia coli (strain SMS-3-5 / SECEC).